We begin with the raw amino-acid sequence, 114 residues long: MSYPEANVLVTTAETIPGYTIVEVLGIVVGITVRSRGLGGNLMAALRSLVGGEIKEFVEMAEQARMQALIRMIDRAKELGANAVVNIRFDSNELNQSMDEIIAYGTAVKVAKNS.

The protein belongs to the UPF0145 family.

This Saccharolobus islandicus (strain Y.G.57.14 / Yellowstone #1) (Sulfolobus islandicus) protein is UPF0145 protein YG5714_0873.